Consider the following 238-residue polypeptide: Probable 2-phosphosulfolactate phosphatase (238 aa).

It belongs to the ComB family. Requires Mg(2+) as cofactor.

The enzyme catalyses (2R)-O-phospho-3-sulfolactate + H2O = (2R)-3-sulfolactate + phosphate. This chain is Probable 2-phosphosulfolactate phosphatase, found in Carboxydothermus hydrogenoformans (strain ATCC BAA-161 / DSM 6008 / Z-2901).